The primary structure comprises 279 residues: Putative expansin-A26 (279 aa).

The N-terminal stretch at 1–27 (MKLLEKMIYVEFLMIIMAMWVVPMSYG) is a signal peptide. In terms of domain architecture, Expansin-like EG45 spans 76-186 (QGACGYGNLF…RRIPCSKTGG (111 aa)). In terms of domain architecture, Expansin-like CBD spans 196-275 (YFLMVLIYNV…NWGFGQTFDG (80 aa)).

This sequence belongs to the expansin family. Expansin A subfamily.

The protein resides in the secreted. Its subcellular location is the cell wall. It is found in the membrane. Its function is as follows. Causes loosening and extension of plant cell walls by disrupting non-covalent bonding between cellulose microfibrils and matrix glucans. No enzymatic activity has been found. The sequence is that of Putative expansin-A26 (EXPA26) from Arabidopsis thaliana (Mouse-ear cress).